We begin with the raw amino-acid sequence, 388 residues long: Cell adhesion molecule 4 (388 aa).

The N-terminal stretch at 1-20 is a signal peptide; the sequence is MGRARRFQWPLLLLWAAAAG. The Ig-like V-type domain maps to 21-119; sequence PGTGQEVQTE…DTHHQIATLT (99 aa). At 25-324 the chain is on the extracellular side; it reads QEVQTENVTV…VEAQTSVPYA (300 aa). N-linked (GlcNAc...) asparagine glycans are attached at residues Asn31 and Asn67. 3 disulfide bridges follow: Cys44-Cys104, Cys145-Cys199, and Cys245-Cys291. 2 Ig-like C2-type domains span residues 124–219 and 224–307; these read PENP…YVLD and PTAR…YVLV. N-linked (GlcNAc...) asparagine glycosylation is present at Asn286. A helical membrane pass occupies residues 325–345; sequence IVGGILALLVFLIICVLVGMV. Residues 346–388 lie on the Cytoplasmic side of the membrane; it reads WCSVRQKGSYLTHEASGLDEQGEAREAFLNGGDGHKRKEEFFI. At Ser361 the chain carries Phosphoserine.

It belongs to the nectin family. In terms of assembly, monomer and homodimer. In terms of processing, N-glycosylated. Expressed in the brain and several organs including the kidney and liver.

The protein resides in the membrane. Involved in the cell-cell adhesion. Has calcium- and magnesium-independent cell-cell adhesion activity. May have tumor-suppressor activity. The sequence is that of Cell adhesion molecule 4 (Cadm4) from Mus musculus (Mouse).